The chain runs to 463 residues: MVKTRFAPSPTGYLHIGGARTALFSWAFARKQGGKFVLRIEDTDLERSTQQSVQAILDGMAWLGLDYDEGPYYQMQRLNRYQEVAEQLLTQGLAYQCYASREELDALREQQRLAGLKPRYDGRWRDSRQTPPAGVKPVVRLKTPQHGYVVFDDLVKGKISVANHELDDLVLLRSDGTPTYNFGVVLDDLDMGITHVIRGDDHVNNTPRQINILKALGAAIPQYAHVPMILGADGERLSKRHGAVSVMHYRDQGYLPEALINYLARLGWSHGDEEIFSREQLVEWFDLAAISRSPAKFNPEKLTWLNQHYLKMADDARLVELVMPFLLERNYPLPATENLLKIVNLLKDRASTIEELADASAYFFRTIEPPEELRTQYFTAEIRPVLEYLVDRLAQIEWKRETIHHEIKQTVSSHNLKFPSLAMPLRVMVTGEAQTPAIDAVLELLGKEETLHRLRGRMEIFPG.

The short motif at 8–18 (PSPTGYLHIGG) is the 'HIGH' region element. The 'KMSKS' region signature appears at 236–240 (RLSKR). ATP is bound at residue Lys-239.

The protein belongs to the class-I aminoacyl-tRNA synthetase family. Glutamate--tRNA ligase type 1 subfamily. Monomer.

The protein localises to the cytoplasm. It catalyses the reaction tRNA(Glu) + L-glutamate + ATP = L-glutamyl-tRNA(Glu) + AMP + diphosphate. Its function is as follows. Catalyzes the attachment of glutamate to tRNA(Glu) in a two-step reaction: glutamate is first activated by ATP to form Glu-AMP and then transferred to the acceptor end of tRNA(Glu). The sequence is that of Glutamate--tRNA ligase from Nitrosomonas europaea (strain ATCC 19718 / CIP 103999 / KCTC 2705 / NBRC 14298).